A 421-amino-acid chain; its full sequence is Histidine--tRNA ligase (421 aa).

This sequence belongs to the class-II aminoacyl-tRNA synthetase family. In terms of assembly, homodimer.

Its subcellular location is the cytoplasm. It catalyses the reaction tRNA(His) + L-histidine + ATP = L-histidyl-tRNA(His) + AMP + diphosphate + H(+). The chain is Histidine--tRNA ligase from Coxiella burnetii (strain Dugway 5J108-111).